Here is a 456-residue protein sequence, read N- to C-terminus: Equilibrative nucleoside transporter 2 (456 aa).

The Cytoplasmic segment spans residues 1–12; it reads MAHGNAPRDSYH. The chain crosses the membrane as a helical span at residues 13-29; the sequence is LVGISFFILGLGTLLPW. Residues 30 to 68 lie on the Extracellular side of the membrane; the sequence is NFFITAIPYFQGRLAGTNSSAETPSTNHTSPTDTFNFNN. Asparagine 47 and asparagine 56 each carry an N-linked (GlcNAc...) asparagine glycan. Residues 69–93 form a helical membrane-spanning segment; sequence WVTLLSQLPLLLFTLLNSFLYQCIP. Topologically, residues 94–97 are cytoplasmic; it reads ESVR. Residues 98–116 form a helical membrane-spanning segment; sequence ILGSLLAILLLFALTAALV. Topologically, residues 117-124 are extracellular; sequence KVDLSPGL. Residues 125–143 form a helical membrane-spanning segment; it reads FFSITMASVWFINSFCAVL. Residues 144–160 are Cytoplasmic-facing; sequence QGSLFGQLGTMPSTYST. A helical transmembrane segment spans residues 161 to 185; that stretch reads LFLSGQGLAGIFAALAMLTSLASGV. Over 186 to 192 the chain is Extracellular; it reads DPQTSAL. Residues 193–213 form a helical membrane-spanning segment; sequence GYFITPCVGILLSIICYLSLP. The Cytoplasmic segment spans residues 214 to 291; the sequence is HLKFARYYLT…VFVVFRKIWL (78 aa). At serine 251 the chain carries Phosphoserine. Residues 292–311 traverse the membrane as a helical segment; that stretch reads TALCLVLVFTVTLSVFPAIT. Residues 312–323 lie on the Extracellular side of the membrane; sequence AMVTTSSNSPGK. Residues 324–342 form a helical membrane-spanning segment; it reads WSQFFNPICCFLLFNVMDW. Residues 343 to 359 are Cytoplasmic-facing; that stretch reads LGRSLTSYFLWPDEDSQ. A helical transmembrane segment spans residues 360-378; the sequence is LLPLLVCLRFLFVPLFMLC. The Extracellular portion of the chain corresponds to 379–393; that stretch reads HVPQRARLPIIFWQD. A helical membrane pass occupies residues 394–413; that stretch reads AYFITFMLLFAISNGYFVSL. The Cytoplasmic portion of the chain corresponds to 414 to 431; it reads TMCLAPRQVLPHEREVAG. A helical membrane pass occupies residues 432–452; the sequence is ALMTFFLALGLSCGASLSFLF. Residues 453 to 456 lie on the Extracellular side of the membrane; the sequence is KALL.

It belongs to the SLC29A/ENT transporter (TC 2.A.57) family. In terms of tissue distribution, expressed in squeletal muscles. Expressed in testis at the blood-brain-barrier.

The protein resides in the apical cell membrane. It is found in the basolateral cell membrane. The enzyme catalyses uridine(out) = uridine(in). It carries out the reaction inosine(in) = inosine(out). The catalysed reaction is adenosine(in) = adenosine(out). It catalyses the reaction thymidine(in) = thymidine(out). The enzyme catalyses hypoxanthine(out) = hypoxanthine(in). It carries out the reaction adenine(out) = adenine(in). The catalysed reaction is cytidine(in) = cytidine(out). It catalyses the reaction thymine(out) = thymine(in). The enzyme catalyses uracil(in) = uracil(out). It carries out the reaction guanine(out) = guanine(in). The catalysed reaction is guanosine(in) = guanosine(out). Functionally, bidirectional uniporter involved in the facilitative transport of nucleosides and nucleobases, and contributes to maintaining their cellular homeostasis. Functions as a Na(+)-independent, passive transporter. Involved in the transport of nucleosides such as inosine, adenosine, uridine, thymidine, cytidine and guanosine. Also able to transport purine nucleobases (hypoxanthine, adenine, guanine) and pyrimidine nucleobases (thymine, uracil). Involved in nucleoside transport at basolateral membrane of kidney cells, allowing liver absorption of nucleoside metabolites. Mediates apical nucleoside uptake into Sertoli cells, thereby regulating the transport of nucleosides in testis across the blood-testis-barrier. Mediates both the influx and efflux of hypoxanthine in skeletal muscle microvascular endothelial cells to control the amount of intracellular hypoxanthine available for xanthine oxidase-mediated ROS production. This chain is Equilibrative nucleoside transporter 2, found in Rattus norvegicus (Rat).